Reading from the N-terminus, the 194-residue chain is CASP-like protein 2D1 (194 aa).

The segment covering 1–16 has biased composition (basic and acidic residues); that stretch reads MRDNNNNNTREEERSS. A disordered region spans residues 1–26; the sequence is MRDNNNNNTREEERSSSSKQQQPQAP. Over 1-30 the chain is Cytoplasmic; sequence MRDNNNNNTREEERSSSSKQQQPQAPMSLK. Residues 31 to 51 form a helical membrane-spanning segment; that stretch reads IIDSCLRLSVVPLSVATIWLT. Topologically, residues 52-74 are extracellular; that stretch reads VTNHESNPDYGNLEYNSIMGLKY. The helical transmembrane segment at 75 to 95 threads the bilayer; sequence MVGVSAISAIYALLSTVSSWV. At 96 to 110 the chain is on the cytoplasmic side; sequence TCLVSKAWLFFIPDQ. The helical transmembrane segment at 111 to 133 threads the bilayer; that stretch reads VLAYVMTTSVAGATEIVYLLNKG. The Extracellular portion of the chain corresponds to 134 to 152; sequence DKIVTWSEMCSSYPHYCSK. The helical transmembrane segment at 153-173 threads the bilayer; the sequence is LTIALGLHVFVLFFFLFLSVI. The Cytoplasmic portion of the chain corresponds to 174–194; that stretch reads SAYRAFSPFDPPCDSQTNNDA.

It belongs to the Casparian strip membrane proteins (CASP) family. As to quaternary structure, homodimer and heterodimers.

The protein resides in the cell membrane. The sequence is that of CASP-like protein 2D1 from Arabidopsis thaliana (Mouse-ear cress).